Consider the following 1761-residue polypeptide: Laminin subunit beta-4 (1761 aa).

A signal peptide spans M1 to A19. Positions N24–S264 constitute a Laminin N-terminal domain. Residues N169, N229, and N246 are each glycosylated (N-linked (GlcNAc...) asparagine). Disulfide bonds link C265-C274, C267-C295, C297-C306, C309-C329, C332-C341, C334-C359, C362-C371, C374-C392, C395-C408, C397-C423, C425-C434, C437-C452, C455-C468, C457-C475, C477-C486, C489-C503, C506-C518, C508-C525, and C527-C536. Laminin EGF-like domains lie at C265 to S331, C332 to P394, C395 to P454, and C455 to P505. The Laminin EGF-like 5; truncated domain occupies C506 to L552. Residues F545–H763 form the Laminin IV type B domain. 31 disulfide bridges follow: C769–C781, C771–C788, C790–C799, C802–C814, C817–C829, C819–C836, C838–C847, C850–C860, C863–C872, C865–C879, C882–C891, C894–C908, C913–C938, C940–C949, C952–C967, C970–C984, C972–C991, C994–C1003, C1006–C1019, C1022–C1043, C1024–C1050, C1052–C1061, C1064–C1077, C1080–C1092, C1082–C1099, C1101–C1110, C1113–C1125, C1128–C1140, C1130–C1147, C1149–C1158, and C1161–C1172. Laminin EGF-like domains follow at residues C769 to P816, C817 to P862, C863 to P910, C911 to P969, C970 to R1021, C1022 to S1079, C1080 to P1127, and C1128 to Q1174. The N-linked (GlcNAc...) asparagine glycan is linked to N1016. N1055 is a glycosylation site (N-linked (GlcNAc...) asparagine). The segment at C1175–V1375 is domain II. N-linked (GlcNAc...) asparagine glycans are attached at residues N1223, N1301, N1326, N1333, and N1354. Residues K1243–N1301 are a coiled coil. Positions C1376–C1408 are domain alpha. The interval H1409–S1761 is domain I. The stretch at T1416–L1480 forms a coiled coil. 6 N-linked (GlcNAc...) asparagine glycosylation sites follow: N1469, N1517, N1587, N1596, N1609, and N1725. A coiled-coil region spans residues I1525–C1759.

In terms of assembly, laminin is a complex glycoprotein, consisting of three different polypeptide chains (alpha, beta, gamma), which are bound to each other by disulfide bonds into a cross-shaped molecule comprising one long and three short arms with globules at each end.

Its subcellular location is the secreted. It localises to the extracellular space. It is found in the extracellular matrix. The protein localises to the basement membrane. Its function is as follows. Binding to cells via a high affinity receptor, laminin is thought to mediate the attachment, migration and organization of cells into tissues during embryonic development by interacting with other extracellular matrix components. The sequence is that of Laminin subunit beta-4 (LAMB4) from Homo sapiens (Human).